The sequence spans 106 residues: ATP-dependent Clp protease adapter protein ClpS (106 aa).

This sequence belongs to the ClpS family. In terms of assembly, binds to the N-terminal domain of the chaperone ClpA.

Its function is as follows. Involved in the modulation of the specificity of the ClpAP-mediated ATP-dependent protein degradation. The protein is ATP-dependent Clp protease adapter protein ClpS of Escherichia coli O127:H6 (strain E2348/69 / EPEC).